The chain runs to 384 residues: 2-deoxy-scyllo-inosose synthase (384 aa).

Residues Asp42, 73-76 (EVHK), 105-109 (GITGN), 129-130 (TT), 140-142 (SLK), and 151-152 (KN) contribute to the NAD(+) site. Lys142 is an active-site residue. Glu184 serves as a coordination point for Co(2+). Residue Glu244 is part of the active site. 2 residues coordinate Co(2+): His247 and His263.

Belongs to the sugar phosphate cyclases superfamily. DOI synthase family. It depends on NAD(+) as a cofactor. Co(2+) is required as a cofactor.

The enzyme catalyses D-glucose 6-phosphate = 2-deoxy-L-scyllo-inosose + phosphate. The protein operates within metabolic intermediate biosynthesis; 2-deoxystreptamine biosynthesis; 2-deoxystreptamine from D-glucose 6-phosphate: step 1/4. Its pathway is antibiotic biosynthesis; lividomycin biosynthesis. In terms of biological role, catalyzes the intramolecular carbocycle formation from D-glucose-6-phosphate to 2-deoxy-scyllo-inosose (DOI). This Streptomyces lividus protein is 2-deoxy-scyllo-inosose synthase (livC).